The following is a 301-amino-acid chain: Probable alpha-L-glutamate ligase (301 aa).

The region spanning 104–287 (LQLLSRKGVG…IAGMVIDFIE (184 aa)) is the ATP-grasp domain. ATP contacts are provided by residues lysine 141, 178-179 (EY), aspartate 187, and 211-213 (RSN). Mg(2+)-binding residues include aspartate 248, glutamate 260, and asparagine 262. Residues aspartate 248, glutamate 260, and asparagine 262 each coordinate Mn(2+).

This sequence belongs to the RimK family. Mg(2+) serves as cofactor. The cofactor is Mn(2+).

This is Probable alpha-L-glutamate ligase from Pseudoalteromonas translucida (strain TAC 125).